The primary structure comprises 427 residues: Enolase (427 aa).

(2R)-2-phosphoglycerate is bound at residue glutamine 163. The active-site Proton donor is the glutamate 205. Mg(2+) is bound by residues aspartate 242, glutamate 285, and aspartate 312. (2R)-2-phosphoglycerate contacts are provided by lysine 337, arginine 366, serine 367, and lysine 388. Lysine 337 functions as the Proton acceptor in the catalytic mechanism.

Belongs to the enolase family. The cofactor is Mg(2+).

The protein resides in the cytoplasm. The protein localises to the secreted. It is found in the cell surface. The enzyme catalyses (2R)-2-phosphoglycerate = phosphoenolpyruvate + H2O. The protein operates within carbohydrate degradation; glycolysis; pyruvate from D-glyceraldehyde 3-phosphate: step 4/5. Functionally, catalyzes the reversible conversion of 2-phosphoglycerate (2-PG) into phosphoenolpyruvate (PEP). It is essential for the degradation of carbohydrates via glycolysis. This is Enolase from Albidiferax ferrireducens (strain ATCC BAA-621 / DSM 15236 / T118) (Rhodoferax ferrireducens).